The chain runs to 386 residues: MKAATQARIDDSPLAWLDAVQRQRHEAGLRRCLRPRPAVATELDLASNDYLGLSRHPAVIDGGVQALRIWGAGATGSRLVTGDTKLHQQFEAELAEFVGAAAGLLFSSGYTANLGAVVGLSGPGSLLVSDARSHASLVDACRLSRARVVVTPHRDVDAVDAALRSRDEQRAVVVTDSVFSADGSLAPVRELLEVCRRHGALLLVDEAHGLGVRGGGRGLLYELGLAGAPDVVMTTTLSKALGSQGGVVLGPTPVRAHLIDAARPFIFDTGLAPAAVGAARAALRVLQAEPWRPQAVLNHAGELARMCGVAAVPDSAMVSVILGEPESAVAAAAACLDAGVKVGCFRPPTVPAGTSRLRLTARASLNAGELELARRVLTDVLAVARR.

A substrate-binding site is contributed by Arg31. 109–110 (GY) provides a ligand contact to pyridoxal 5'-phosphate. His134 is a binding site for substrate. Residues Ser180, 205 to 208 (DEAH), and 236 to 239 (TLSK) contribute to the pyridoxal 5'-phosphate site. An N6-(pyridoxal phosphate)lysine modification is found at Lys239. Thr349 provides a ligand contact to substrate.

Belongs to the class-II pyridoxal-phosphate-dependent aminotransferase family. BioF subfamily. As to quaternary structure, homodimer. Pyridoxal 5'-phosphate serves as cofactor.

The catalysed reaction is 6-carboxyhexanoyl-[ACP] + L-alanine + H(+) = (8S)-8-amino-7-oxononanoate + holo-[ACP] + CO2. It participates in cofactor biosynthesis; biotin biosynthesis. Functionally, catalyzes the decarboxylative condensation of pimeloyl-[acyl-carrier protein] and L-alanine to produce 8-amino-7-oxononanoate (AON), [acyl-carrier protein], and carbon dioxide. This is 8-amino-7-oxononanoate synthase from Mycobacterium bovis (strain ATCC BAA-935 / AF2122/97).